Here is a 113-residue protein sequence, read N- to C-terminus: Hydrogenase maturation factor HypA (113 aa).

Ni(2+) is bound at residue His2. The Zn(2+) site is built by Cys73, Cys76, Cys89, and Cys92.

Belongs to the HypA/HybF family.

In terms of biological role, involved in the maturation of [NiFe] hydrogenases. Required for nickel insertion into the metal center of the hydrogenase. The chain is Hydrogenase maturation factor HypA from Aeromonas salmonicida (strain A449).